Consider the following 290-residue polypeptide: MKKEINFLGKRVRRVFMILSLLFVIIGMYFFFTKGLNYSIDFQSGSVIYYKLSSPLNSNQIANLRDIARSFYSKSTIQTGSNGKEVWIRTKFLEENELKRLTSEVEKVIVKYEGREITTIEPTISRELREKAILAAVLAIIVMLVYITVRFRFDFAISAIINEAFVLLATISIFAISQWEVSPSFIAAILTLLGYAINDNIIVFDRIRENSKKYPKEDFTIIANRSINQTLARTLYTVITTLLAITPLLIWGGVVLRPFILAIYLGIIIGTYSTIYIASAILCEWRELQK.

A run of 6 helical transmembrane segments spans residues 15–35 (VFMI…FTKG), 131–151 (KAIL…TVRF), 156–176 (AISA…IFAI), 184–204 (SFIA…IIVF), 234–256 (TLYT…GVVL), and 260–282 (ILAI…SAIL).

This sequence belongs to the SecD/SecF family. SecF subfamily. Forms a complex with SecD. Part of the essential Sec protein translocation apparatus which comprises SecA, SecYEG and auxiliary proteins SecDF. Other proteins may also be involved.

The protein resides in the cell inner membrane. In terms of biological role, part of the Sec protein translocase complex. Interacts with the SecYEG preprotein conducting channel. SecDF uses the proton motive force (PMF) to complete protein translocation after the ATP-dependent function of SecA. The protein is Protein translocase subunit SecF of Dictyoglomus turgidum (strain DSM 6724 / Z-1310).